Reading from the N-terminus, the 537-residue chain is MSAFQRLRQIALAIILTWGWKRALVAITAGALSVLALAPFNLFPVLFITFPVLVWLIDGAGAGRYRGIPAAALTGYWFGLGYFVPGLYWIGYAFFVDADVFAWLTPFAVLGLPAYLSIFTAIGFALARLLWTKNATRVLALAASLTIAEWLRGHALTGFPWNAFGYALSEPLPLAQTASLIGLWGMTFLTVAIFASPATLIDRTPDRRVAWRAPAAAVALLIAMSIFGAIRLSLHPTTMVAGAKLRLMQPNLQQDAKFNYAAKTEVMKKYLALSDRASGPQSTGVRDATILIWPESAFPFFLTREADAMAEIAELLPKGTVLITGSVRAPDLPRGTPITRAYNSIYVIDHDGSVLAVYDKLHLVPFGEFLPYQDLMEKLGFEQLTRVRGGFIAGTVRHALPMPGAPSALPLICYEAIFPGEVAGRNERPGWIVNLTNDGWFGISTGPYQHLEQARMRAIELGLPLVRSANTGISAVIDPVGRTVASLGLGVEGILDASLPAAIPPTIYARVGDVPAAVLVALAVLLAVRRRVAKRHP.

6 helical membrane-spanning segments follow: residues Ile10–Gly30, Leu37–Ile57, Tyr76–Val96, Phe107–Ala127, Ile181–Ile201, and Ala210–Ile230. In terms of domain architecture, CN hydrolase spans Met248–Ala501. Catalysis depends on Glu295, which acts as the Proton acceptor. Lys360 is a catalytic residue. The Nucleophile role is filled by Cys413. A helical membrane pass occupies residues Ile507–Ala527.

This sequence belongs to the CN hydrolase family. Apolipoprotein N-acyltransferase subfamily.

It localises to the cell inner membrane. The enzyme catalyses N-terminal S-1,2-diacyl-sn-glyceryl-L-cysteinyl-[lipoprotein] + a glycerophospholipid = N-acyl-S-1,2-diacyl-sn-glyceryl-L-cysteinyl-[lipoprotein] + a 2-acyl-sn-glycero-3-phospholipid + H(+). Its pathway is protein modification; lipoprotein biosynthesis (N-acyl transfer). Catalyzes the phospholipid dependent N-acylation of the N-terminal cysteine of apolipoprotein, the last step in lipoprotein maturation. In Bradyrhizobium diazoefficiens (strain JCM 10833 / BCRC 13528 / IAM 13628 / NBRC 14792 / USDA 110), this protein is Apolipoprotein N-acyltransferase.